The following is a 479-amino-acid chain: Anaerobic nitric oxide reductase flavorubredoxin (479 aa).

The tract at residues 30 to 210 (LRGSSYNSYL…PFSRLVTPKI (181 aa)) is zinc metallo-hydrolase. Fe cation contacts are provided by His79, Glu81, Asp83, His147, Asp166, and His227. Residues 254–393 (ITIFYDTMSN…LCREHGREIA (140 aa)) enclose the Flavodoxin-like domain. FMN contacts are provided by residues 260–264 (TMSNN) and 342–369 (AFGS…EMSL). Residues 423-474 (GPRMQCSVCQWIYDPAKGEPMQDVAPGTPWSEVPDNFLCPECSLGKDVFEEL) enclose the Rubredoxin-like domain. Residues Cys428, Cys431, Cys461, and Cys464 each contribute to the Fe cation site.

It in the N-terminal section; belongs to the zinc metallo-hydrolase group 3 family. Homotetramer. It depends on Fe cation as a cofactor. FMN serves as cofactor.

It localises to the cytoplasm. The protein operates within nitrogen metabolism; nitric oxide reduction. Functionally, anaerobic nitric oxide reductase; uses NADH to detoxify nitric oxide (NO), protecting several 4Fe-4S NO-sensitive enzymes. Has at least 2 reductase partners, only one of which (NorW, flavorubredoxin reductase) has been identified. NO probably binds to the di-iron center; electrons enter from the NorW at rubredoxin and are transferred sequentially to the FMN center and the di-iron center. Also able to function as an aerobic oxygen reductase. In Shigella boydii serotype 4 (strain Sb227), this protein is Anaerobic nitric oxide reductase flavorubredoxin.